A 115-amino-acid chain; its full sequence is Small ribosomal subunit protein bS16 (115 aa).

The segment at 81 to 115 (GLAPKPTYNEQPKKSAPKAKAQERAKAAADAAAAA) is disordered.

The protein belongs to the bacterial ribosomal protein bS16 family.

This is Small ribosomal subunit protein bS16 from Gluconobacter oxydans (strain 621H) (Gluconobacter suboxydans).